Reading from the N-terminus, the 249-residue chain is Small ribosomal subunit protein uS3y (249 aa).

A KH type-2 domain is found at 21 to 92 (LNEVLTRELA…SVELYAEKVN (72 aa)). S212 bears the Phosphoserine mark.

Belongs to the universal ribosomal protein uS3 family.

The polypeptide is Small ribosomal subunit protein uS3y (RPS3B) (Arabidopsis thaliana (Mouse-ear cress)).